Here is a 147-residue protein sequence, read N- to C-terminus: Zinc finger HIT domain-containing protein 3 (147 aa).

8 residues coordinate Zn(2+): C3, C6, C14, C17, C22, C26, H30, and C34. The HIT-type zinc finger occupies 3-34; it reads CVICLEKPKYRCPACRVPYCSVACFRKHKEQC. The interval 45-67 is disordered; that stretch reads IRSALPTKTXKPVENKDDDDSIA. S72 carries the phosphoserine modification.

In terms of assembly, thyroid receptor interacting proteins (TRIPs) specifically interact with the ligand binding domain of the thyroid receptor (TR). Requires the presence of thyroid hormone for its interaction. Interacts with NUFIP1. Interacts (via HIT-type zinc finger) with the RUVBL1/RUVBL2 complex in the presence of ADP.

The protein localises to the cytoplasm. It is found in the nucleus. The protein is Zinc finger HIT domain-containing protein 3 (ZNHIT3) of Macaca mulatta (Rhesus macaque).